The sequence spans 414 residues: Glutamyl-tRNA reductase (414 aa).

Substrate contacts are provided by residues 51–54 (TCNR), S107, 112–114 (EYE), and Q118. C52 (nucleophile) is an active-site residue. 187-192 (GAGEIG) is an NADP(+) binding site.

It belongs to the glutamyl-tRNA reductase family. As to quaternary structure, homodimer.

The catalysed reaction is (S)-4-amino-5-oxopentanoate + tRNA(Glu) + NADP(+) = L-glutamyl-tRNA(Glu) + NADPH + H(+). It functions in the pathway porphyrin-containing compound metabolism; protoporphyrin-IX biosynthesis; 5-aminolevulinate from L-glutamyl-tRNA(Glu): step 1/2. Catalyzes the NADPH-dependent reduction of glutamyl-tRNA(Glu) to glutamate 1-semialdehyde (GSA). The chain is Glutamyl-tRNA reductase from Sulfolobus acidocaldarius (strain ATCC 33909 / DSM 639 / JCM 8929 / NBRC 15157 / NCIMB 11770).